Here is an 85-residue protein sequence, read N- to C-terminus: U4-theraphotoxin-Hhn1q (85 aa).

Positions 1–22 (MKVTLIAILTCAAVLVLHTTAA) are cleaved as a signal peptide. Residues 23–48 (EELEAESQLMEVGMPDTELAAVDEER) constitute a propeptide that is removed on maturation. 3 cysteine pairs are disulfide-bonded: cysteine 52-cysteine 66, cysteine 56-cysteine 77, and cysteine 71-cysteine 82.

The protein belongs to the neurotoxin 12 (Hwtx-2) family. 02 (Hwtx-2) subfamily. In terms of tissue distribution, expressed by the venom gland.

The protein resides in the secreted. In terms of biological role, postsynaptic neurotoxin. This Cyriopagopus hainanus (Chinese bird spider) protein is U4-theraphotoxin-Hhn1q.